The primary structure comprises 570 residues: Urease subunit alpha (570 aa).

The Urease domain maps to 132-570; sequence GGFDSHIHYI…LPLAQRYFLF (439 aa). Positions 137, 139, and 220 each coordinate Ni(2+). Lys220 is modified (N6-carboxylysine). Substrate is bound at residue His222. Residues His249 and His275 each coordinate Ni(2+). His323 serves as the catalytic Proton donor. Asp363 contributes to the Ni(2+) binding site.

This sequence belongs to the metallo-dependent hydrolases superfamily. Urease alpha subunit family. In terms of assembly, heterotrimer of UreA (gamma), UreB (beta) and UreC (alpha) subunits. Three heterotrimers associate to form the active enzyme. Requires Ni cation as cofactor. Post-translationally, carboxylation allows a single lysine to coordinate two nickel ions.

Its subcellular location is the cytoplasm. It catalyses the reaction urea + 2 H2O + H(+) = hydrogencarbonate + 2 NH4(+). Its pathway is nitrogen metabolism; urea degradation; CO(2) and NH(3) from urea (urease route): step 1/1. The protein is Urease subunit alpha of Ruegeria sp. (strain TM1040) (Silicibacter sp.).